The following is a 1031-amino-acid chain: NACHT, LRR and PYD domains-containing protein 3 (1031 aa).

The region spanning 1-93 (MRMVSVRCKL…YEKAKREEPE (93 aa)) is the Pyrin domain. Serine 5 carries the post-translational modification Phosphoserine. Phosphotyrosine is present on tyrosine 13. Residue cysteine 125 is the site of S-palmitoyl cysteine attachment. Residues 126 to 129 (RKKK) are required for binding to phosphatidylinositol 4-phosphate (PtdIns4P). Tyrosine 131, tyrosine 135, and tyrosine 138 each carry phosphotyrosine. Residues 135-207 (YRKYVRSKFQ…SSVNLELLFD (73 aa)) enclose the FISNA domain. Serine 156 is subject to Phosphoserine. An ATP-binding site is contributed by threonine 164. Serine 195 and serine 198 each carry phosphoserine. Residues 217-533 (HTVVFQGAAG…EFFAAMYYLL (317 aa)) form the NACHT domain. 223 to 230 (GAAGIGKT) is a binding site for ATP. 2 positions are modified to phosphoserine: serine 262 and serine 292. Lysine 321 is covalently cross-linked (Glycyl lysine isopeptide (Lys-Gly) (interchain with G-Cter in ubiquitin)). The residue at position 331 (serine 331) is a Phosphoserine. The KFERQ-like motif 1 signature appears at 352–356 (LEKLQ). Lysine 427 is covalently cross-linked (Glycyl lysine isopeptide (Lys-Gly) (interchain with G-Cter in ubiquitin)). Residue histidine 519 coordinates ATP. A KFERQ-like motif 2 motif is present at residues 601–605 (KIRLE). Lysine 687 is covalently cross-linked (Glycyl lysine isopeptide (Lys-Gly) (interchain with G-Cter in ubiquitin)). 2 positions are modified to phosphoserine: serine 723 and serine 730. LRR repeat units lie at residues 737-757 (NLTE…NVLC), 766-787 (NIRR…NISS), 794-814 (KLVE…RLLC), 823-844 (NLKK…DLAS), and 851-871 (SLTR…GILC). A KFERQ-like motif 3 motif is present at residues 793 to 797 (QKLVE). Serine 801 carries the post-translational modification Phosphoserine. Residues cysteine 832, cysteine 833, and cysteine 839 are each lipidated (S-palmitoyl cysteine). A Phosphotyrosine modification is found at tyrosine 856. A Glycyl lysine isopeptide (Lys-Gly) (interchain with G-Cter in ubiquitin) cross-link involves residue lysine 873. LRR repeat units lie at residues 880 to 901 (NLQK…ALSS), 908 to 929 (NLTH…LLCE), 937 to 958 (KLQV…DLST), and 965 to 986 (SLRK…LLCE). Cysteine 953 is lipidated: S-palmitoyl cysteine. Lysine 968 participates in a covalent cross-link: Glycyl lysine isopeptide (Lys-Gly) (interchain with G-Cter in ubiquitin). A KFERQ-like motif 4 motif is present at residues 986 to 990 (EVLKQ). Phosphoserine is present on serine 1030.

Belongs to the NLRP family. As to quaternary structure, sensor component of NLRP3 inflammasomes; inflammasomes are supramolecular complexes that assemble in the cytosol in response to pathogens and other damage-associated signals and play critical roles in innate immunity and inflammation. The core of NLRP3 inflammasomes consists of a signal sensor component (NLRP3), an adapter (PYCARD/ASC), which recruits an effector pro-inflammatory caspase (CASP1 and, possibly, CASP4 and CASP5). Homodecamer; inactive NLRP3 forms homodecameric double-ring cages that hide pyrin domains within NACHT-LRR rings to avoid premature activation. Interacts (via pyrin domain) with PYCARD/ASC (via pyrin domain); interaction is direct. Interacts (via LRR repeat domain) with NEK7 (via N-terminus); the interaction is required for the formation of the complex NLRP3:PYCARD, oligomerization of PYCARD/ASC and activation of CASP1. Interacts (via LRR repeat domain) with NR4A1/Nur77 (via N-terminus); the interaction is direct, requires activation of NR4A1 by its ligands NBRE-containing dsDNA and lipopolysaccharide, and stimulates the association of NLRP3 with NEK7 for non-canonical NLRP3 inflammasome activation. Interacts with CARD8; leading to inhibit formation of the NLRP3 inflammasome. Interacts with MEFV; this interaction targets NLRP3 to degradation by autophagy, hence preventing excessive IL1B- and IL18-mediated inflammation. Interacts with EIF2AK2/PKR; this interaction requires EIF2AK2 activity, is accompanied by EIF2AK2 autophosphorylation and promotes inflammasome assembly in response to specific stimuli. Interacts with GBP5 (via DAPIN domain); this interaction promotes inflammasome assembly in response to microbial and soluble, but not crystalline, agents. Interacts with PML (isoform PML-1) (via the leucine-rich repeat (LRR) domain); PML-mediated increase in NLRP3 inflammasome activation does not depend upon this interaction. Interacts (via NACHT domain) with DHX33 (via DEAH box); NLRP3 activation in presence of cytosolic dsRNA is mediated by DHX33. Interacts (via NACHT and LRR domains) with ARRB2; this interaction is direct and inducible by polyunsaturated fatty acids (PUFAs). Interacts (via NACHT domain) with DDX3X under both LPS-primed and inflammasome-activating conditions. Interacts with IRF4 (via the LRR domain); this interaction is direct and is required for optimal IRF4 binding to IL4 promoter and efficient IL4 transactivation during differentiation of Th2 helper T-cells. Interacts with MAVS; promoting localization to mitochondria and activation of the NLRP3 inflammasome. Interacts with MARK4; promoting localization of NLRP3 to the microtubule organizing center (MTOC). Interacts with TRIM50; this interaction also promotes NLRP3 oligomerization and subsequent inflammasome activation. Interacts with IRGM; preventing NLRP3 inflammasome assembly and promoting NLRP3 degradation. Interacts (via KFERQ-like motifs) with HSPA8/HSC70; promoting NLRP3 degradation by the chaperone-mediated autophagy pathway. Interacts (via NACHT and LLR domains) with ABHD8; this interaction is enhanced in the presence of NLRP3 inflammasome inducers, such as ATP, nigericin, silica, or alum. Interaction with ABHD8 leads the recruitment of ZDHHC12, hence facilitating NLRP3 palmitoylation and degradation by the chaperone-mediated autophagy pathway (CMA), therefore attenuating NLRP3 inflammasome activation. Post-translationally, phosphorylation at Ser-198 by MAPK8/JNK1 increases inflammasome activation by promoting deubiquitination by BRCC3 and NLRP3 homooligomerization. Phosphorylation at Ser-801 by CSNK1A1 prevents inflammasome activation by preventing NEK7 recruitment. Phosphorylation at Ser-5 in the pyrin domain inhibits homomultimerization of NLRP3 and activation of the NLRP3 inflammasome: dephosphorylation by protein phosphatase 2A (PP2A) promotes assembly of the NLRP3 inflammasome. Phosphorylation at Ser-292 by PKD/PRKD1 promotes NLRP3 inflammasome assembly. Phosphorylation by ERK1/MAPK3 promotes NLRP3 inflammasome assembly. Phosphorylation by BTK (at Tyr-131, Tyr-135 and Tyr-138) in the region that mediates binding to phosphatidylinositol phosphate, promotes relocalization of NLRP3 and assembly of the NLRP3 inflammasome. Phosphorylation at Tyr-856 inhibits NLRP3 inflammasome assembly: dephosphorylation by PTPN22 promotes inflammasome activation. Phosphorylated by LATS1 and LATS2 at Ser-262 following palmitoylation by ZDHHC1, promoting its relocalization to the microtubule organizing center (MTOC), where NLRP3 is activated by NEK7, leading to inflammasome assembly and activation. In terms of processing, ubiquitinated; undergoes both 'Lys-48'- and 'Lys-63'-linked polyubiquitination. Ubiquitination does not lead to degradation, but inhibits inflammasome activation. Deubiquitination is catalyzed by BRCC3 and associated with NLRP3 activation and inflammasome assembly. This process can be induced by the activation of Toll-like receptors (by LPS), through a non-transcriptional pathway dependent on the mitochondrial production of reactive oxygen species, and by ATP. Ubiquitinated by TRIM31 via 'Lys-48'-linked ubiquitination, leading to its degradation by the proteasome. Ubiquitinated at Lys-687 by the SCF(FBXL2) complex, leading to its degradation by the proteasome. Ubiquitinated by TRIM35 via 'lys-48' and 'Lys-63'-linked ubiquitination leading to inhibition of NLRP3 inflammasome activation. Undergoes 'Lys-27'-linked polyubiquitination by MARCHF5, leading to NLRP3-NEK7 complex formation and NLRP3 oligomerization. Palmitoylation by ZDHHC12 promotes NLRP3 degradation by the chaperone-mediated autophagy pathway (CMA) and therefore limits NLRP3 inflammasome activation. Interaction with ZDHHC12, and hence NLRP3 palmitoylation, is greatly enhanced by ABHD8. Following palmitoylation, HSPA8/HSC70 recognizes and binds the KFERQ-like motifs on NLRP3 and promotes NLRP3 recruitment to lysosomes, where it is degraded via the chaperone-mediated autophagy pathway in a LAMP2-dependent process. Palmitoylation at Cys-832 and Cys-833 by ZDHHC5 enhances its binding to NEK7 leading to inflammasome assembly and activation. Palmitoylation at Cys-125 and Cys-953 by ZDHHC1 facilitates phosphorylation at Ser-262 by LATS1 and LATS2, promoting its relocalization to the microtubule organizing center (MTOC), where NLRP3 is activated by NEK7, leading to inflammasome assembly and activation. Depalmitoylated by ABHD17A. Post-translationally, degraded via selective autophagy following interaction with IRGM. IRGM promotes NLRP3 recruitment to autophagosome membranes, promoting its SQSTM1/p62-dependent autophagy-dependent degradation.

Its subcellular location is the cytoplasm. The protein resides in the cytosol. It localises to the inflammasome. It is found in the cytoskeleton. The protein localises to the microtubule organizing center. Its subcellular location is the golgi apparatus membrane. The protein resides in the endoplasmic reticulum. It localises to the mitochondrion. It is found in the secreted. The protein localises to the nucleus. The catalysed reaction is ATP + H2O = ADP + phosphate + H(+). Under resting conditions, NLRP3 binds ADP and is autoinhibited. Inactive NLRP3 forms homodecameric double-ring cages that hide pyrin domains within NACHT-LRR rings to avoid premature activation. NLRP3 activation stimuli include extracellular ATP, nigericin, reactive oxygen species, crystals of monosodium urate or cholesterol, amyloid-beta fibers, environmental or industrial particles and nanoparticles, such as asbestos, silica, aluminum salts, cytosolic dsRNA, etc. Almost all stimuli trigger intracellular K(+) efflux. These stimuli lead to membrane perturbations that induce activation of NLRP3. Upon activation, NLRP3 is transported to microtubule organizing center (MTOC), where it is unlocked by NEK7, leading to its relocalization to dispersed trans-Golgi network (dTGN) vesicle membranes and recruitment of PYCARD/ASC for the formation of an active inflammasome complex. NEK7-activated NLRP3 forms a disk-shaped inflammasome. NLRP3 and PYCARD/ASC interact via their respective pyrin domains; interaction initiates speck formation (nucleation) which greatly enhances further addition of soluble PYCARD/ASC molecules to the speck in a prion-like polymerization process. Clustered PYCARD/ASC nucleates the formation of CASP1 filaments through the interaction of their respective CARD domains, acting as a platform for CASP1 polymerization and activation. Active CASP1 then processes IL1B and IL18 precursors, leading to the release of mature cytokines in the extracellular milieu and inflammatory response. NLRP3 inflammasome assembly is inhibited by IRGM, which impedes NLRP3 oligomerization. NLRP3 inflammasome is inhibited by cyclic AMP (cAMP), which directly binds NLRP3; inhibition is relieved by calcium-sensing receptor CASR, which inhibits production of cAMP. Specifically inhibited by sulfonylurea MCC950 (also named CP-456,773, CRID3), a potent and specific small-molecule inhibitor of the NLRP3 inflammasome that acts by preventing ATP hydrolysis. Functionally, sensor component of the NLRP3 inflammasome, which mediates inflammasome activation in response to defects in membrane integrity, leading to secretion of inflammatory cytokines IL1B and IL18 and pyroptosis. In response to pathogens and other damage-associated signals that affect the integrity of membranes, initiates the formation of the inflammasome polymeric complex composed of NLRP3, CASP1 and PYCARD/ASC. Recruitment of pro-caspase-1 (proCASP1) to the NLRP3 inflammasome promotes caspase-1 (CASP1) activation, which subsequently cleaves and activates inflammatory cytokines IL1B and IL18 and gasdermin-D (GSDMD), promoting cytokine secretion and pyroptosis. Activation of NLRP3 inflammasome is also required for HMGB1 secretion; stimulating inflammatory responses. Under resting conditions, ADP-bound NLRP3 is autoinhibited. NLRP3 activation stimuli include extracellular ATP, nigericin, reactive oxygen species, crystals of monosodium urate or cholesterol, amyloid-beta fibers, environmental or industrial particles and nanoparticles, such as asbestos, silica, aluminum salts, cytosolic dsRNA, etc. Almost all stimuli trigger intracellular K(+) efflux. These stimuli lead to membrane perturbation and activation of NLRP3. Upon activation, NLRP3 is transported to microtubule organizing center (MTOC), where it is unlocked by NEK7, leading to its relocalization to dispersed trans-Golgi network (dTGN) vesicle membranes and formation of an active inflammasome complex. Associates with dTGN vesicle membranes by binding to phosphatidylinositol 4-phosphate (PtdIns4P). Shows ATPase activity. Its function is as follows. Independently of inflammasome activation, regulates the differentiation of T helper 2 (Th2) cells and has a role in Th2 cell-dependent asthma and tumor growth. During Th2 differentiation, required for optimal IRF4 binding to IL4 promoter and for IRF4-dependent IL4 transcription. Binds to the consensus DNA sequence 5'-GRRGGNRGAG-3'. May also participate in the transcription of IL5, IL13, GATA3, CCR3, CCR4 and MAF. In Bos taurus (Bovine), this protein is NACHT, LRR and PYD domains-containing protein 3 (NLRP3).